Consider the following 351-residue polypeptide: Histidinol-phosphate aminotransferase (351 aa).

Position 221 is an N6-(pyridoxal phosphate)lysine (lysine 221).

Belongs to the class-II pyridoxal-phosphate-dependent aminotransferase family. Histidinol-phosphate aminotransferase subfamily. In terms of assembly, homodimer. It depends on pyridoxal 5'-phosphate as a cofactor.

It carries out the reaction L-histidinol phosphate + 2-oxoglutarate = 3-(imidazol-4-yl)-2-oxopropyl phosphate + L-glutamate. It functions in the pathway amino-acid biosynthesis; L-histidine biosynthesis; L-histidine from 5-phospho-alpha-D-ribose 1-diphosphate: step 7/9. The polypeptide is Histidinol-phosphate aminotransferase (Staphylococcus saprophyticus subsp. saprophyticus (strain ATCC 15305 / DSM 20229 / NCIMB 8711 / NCTC 7292 / S-41)).